We begin with the raw amino-acid sequence, 309 residues long: Dicarboxylate carrier UCP2 (309 aa).

Over 1 to 16 the chain is Mitochondrial intermembrane; it reads MVGFKATDVPPTATVK. Solcar repeat units lie at residues 11–106, 114–203, and 212–297; these read PTAT…VKQF, ASIG…IKDA, and DDLP…LKRA. Residues 16–63 form an important for interaction with long-chain fatty acids region; it reads KFLGAGTAACIADLITFPLDTAKVRLQIQGESQGPVHATASAQYRGVM. Residues 17-40 traverse the membrane as a helical segment; that stretch reads FLGAGTAACIADLITFPLDTAKVR. Residues 41–77 lie on the Mitochondrial matrix side of the membrane; it reads LQIQGESQGPVHATASAQYRGVMGTILTMVRTEGPRS. The chain crosses the membrane as a helical span at residues 78–103; the sequence is LYNGLVAGLQRQMSFASVRIGLYDSV. The Mitochondrial intermembrane portion of the chain corresponds to 104 to 119; that stretch reads KQFYTKGSEHASIGSR. Residues 120-145 form a helical membrane-spanning segment; sequence LLAGSTTGALAVAVAQPTDVVKVRFQ. The Mitochondrial matrix portion of the chain corresponds to 146–173; it reads AQARAGGGRRYQSTVNAYKTIAREEGFR. The chain crosses the membrane as a helical span at residues 174–199; sequence GLWKGTSPNVARNAIVNCAELVTYDL. The Mitochondrial intermembrane portion of the chain corresponds to 200–217; the sequence is IKDALLKANLMTDDLPCH. The chain crosses the membrane as a helical span at residues 218–242; that stretch reads FTSAFGAGFCTTVIASPVDVVKTRY. Residues 243–268 are Mitochondrial matrix-facing; that stretch reads MNSALGQYSSAGHCALTMLQKEGPRA. A helical membrane pass occupies residues 269–294; it reads FYKGFMPSFLRLGSWNVVMFVTYEQL. An important for interaction with long-chain fatty acids region spans residues 278–285; sequence LRLGSWNV. Over 295–309 the chain is Mitochondrial intermembrane; that stretch reads KRALMAACTSREAPF.

The protein belongs to the mitochondrial carrier (TC 2.A.29) family. In terms of assembly, homotetramer. Adopts an asymmetrical dimer of dimers functional form. Interacts with MICU1 (when methylated); leading to decrease the calcium sensitivity of MICU1.

It localises to the mitochondrion inner membrane. It carries out the reaction L-aspartate(out) + phosphate(in) + H(+)(in) = L-aspartate(in) + phosphate(out) + H(+)(out). The catalysed reaction is oxaloacetate(out) + phosphate(in) + H(+)(in) = oxaloacetate(in) + phosphate(out) + H(+)(out). The enzyme catalyses (S)-malate(out) + phosphate(in) + H(+)(in) = (S)-malate(in) + phosphate(out) + H(+)(out). It catalyses the reaction malonate(out) + phosphate(in) + H(+)(in) = malonate(in) + phosphate(out) + H(+)(out). It carries out the reaction sulfate(out) + phosphate(in) + H(+)(in) = sulfate(in) + phosphate(out) + H(+)(out). The catalysed reaction is (S)-malate(out) = (S)-malate(in). The enzyme catalyses L-aspartate(out) = L-aspartate(in). It catalyses the reaction phosphate(in) = phosphate(out). It carries out the reaction chloride(in) = chloride(out). The catalysed reaction is H(+)(in) = H(+)(out). The enzyme catalyses a long-chain fatty acid(out) = a long-chain fatty acid(in). Functionally, antiporter that exports dicarboxylate intermediates of the Krebs cycle in exchange for phosphate plus a proton across the inner membrane of mitochondria, a process driven by mitochondrial motive force with an overall impact on glycolysis, glutaminolysis and glutathione-dependent redox balance. Continuous export of oxaloacetate and related four-carbon dicarboxylates from mitochondrial matrix into the cytosol negatively regulates the oxidation of acetyl-CoA substrates via the Krebs cycle lowering the ATP/ADP ratio and reactive oxygen species (ROS) production. May mediate inducible proton entry into the mitochondrial matrix affecting ATP turnover as a protection mechanism against oxidative stress. The proton currents are most likely associated with fatty acid flipping across the inner membrane of mitochondria in a metabolic process regulated by free fatty acids and purine nucleotides. Regulates the use of glucose as a source of energy. Required for glucose-induced DRP1-dependent mitochondrial fission and neuron activation in the ventromedial nucleus of the hypothalamus (VMH). This mitochondrial adaptation mechanism modulates the VMH pool of glucose-excited neurons with an impact on systemic glucose homeostasis. Regulates ROS levels and metabolic reprogramming of macrophages during the resolution phase of inflammation. Attenuates ROS production in response to IL33 to preserve the integrity of the Krebs cycle required for persistent production of itaconate and subsequent GATA3-dependent differentiation of inflammation-resolving alternatively activated macrophages. Can unidirectionally transport anions including L-malate, L-aspartate, phosphate and chloride ions. Does not mediate adaptive thermogenesis. The sequence is that of Dicarboxylate carrier UCP2 (UCP2) from Pongo abelii (Sumatran orangutan).